The following is a 631-amino-acid chain: DDB1- and CUL4-associated factor 8-like protein 2 (631 aa).

2 disordered regions span residues 1 to 91 and 108 to 163; these read MSHQ…EDFE and EEET…HEQY. Positions 44–54 are enriched in polar residues; it reads SELSVTVTGDG. Acidic residues-rich tracts occupy residues 77–88 and 108–147; these read SASEDIELESLE and EEET…EEEE. WD repeat units follow at residues 226–265, 269–310, 316–356, 364–404, 420–459, 467–507, and 511–550; these read DHVG…PVLN, GHTN…YFNN, QHRG…PASK, DKKV…KKEN, DFPT…GAQY, RNNT…IIQF, and SREG…ATEL. The disordered stretch occupies residues 594–631; sequence QDWRSGEAEFPDEESDESSSTSETSEEEVQDRVQCMPS.

The protein belongs to the WD repeat DCAF8 family.

The chain is DDB1- and CUL4-associated factor 8-like protein 2 (DCAF8L2) from Homo sapiens (Human).